Consider the following 260-residue polypeptide: Peptidase inhibitor 15-A (260 aa).

The N-terminal stretch at 1–21 (MNENRLAIDILLLCISCGASA) is a signal peptide. A propeptide spanning residues 22–62 (LAGFSPTASSSLPATNLTDIGFAPPKYLTEAANIPKTRRKR) is cleaved from the precursor. Asparagine 37 and asparagine 126 each carry an N-linked (GlcNAc...) asparagine glycan. Positions 73-213 (LDYHNKVRGK…KRATYLVCNY (141 aa)) constitute an SCP domain.

It belongs to the CRISP family.

The protein localises to the secreted. Serine protease inhibitor which displays weak inhibitory activity against trypsin. May play a role in facial patterning during embryonic development. The sequence is that of Peptidase inhibitor 15-A (pi15a) from Danio rerio (Zebrafish).